The chain runs to 104 residues: MKPCQKMEGNLEKEDEPKPEEEPKPEEKPEEGQEPEEEEKSEETFRERLIRSLQDFQEDIHNRHLSSDDLFRDVEELDEIRKVRNKLIVTRWKANRSHPYPYLM.

The segment at 1–48 is disordered; that stretch reads MKPCQKMEGNLEKEDEPKPEEEPKPEEKPEEGQEPEEEEKSEETFRER. A compositionally biased stretch (basic and acidic residues) spans 9–31; sequence GNLEKEDEPKPEEEPKPEEKPEE. Residues 32 to 41 are compositionally biased toward acidic residues; that stretch reads GQEPEEEEKS.

This sequence belongs to the TFS-II family. TFA subfamily.

Its subcellular location is the nucleus. Functionally, may be involved in transcriptional regulation. The sequence is that of Transcription elongation factor A protein-like 9 (Tceal9) from Mus musculus (Mouse).